The sequence spans 447 residues: Chromosomal replication initiator protein DnaA (447 aa).

The interval 1–66 (MSNRIISILK…SKAIKEAYGK (66 aa)) is domain I, interacts with DnaA modulators. Residues 66-102 (KNLDYEIVYETTEPEAFNKSNESYKGPLVKKKPLLIS) form a domain II region. Positions 103 to 319 (NLNANYTFEN…GVIIKLIVQS (217 aa)) are domain III, AAA+ region. 4 residues coordinate ATP: glycine 146, glycine 148, lysine 149, and threonine 150. The domain IV, binds dsDNA stretch occupies residues 320–447 (SINKERIGAA…NTMATSSAAG (128 aa)).

It belongs to the DnaA family. As to quaternary structure, oligomerizes as a right-handed, spiral filament on DNA at oriC.

The protein localises to the cytoplasm. Functionally, plays an essential role in the initiation and regulation of chromosomal replication. ATP-DnaA binds to the origin of replication (oriC) to initiate formation of the DNA replication initiation complex once per cell cycle. Binds the DnaA box (a 9 base pair repeat at the origin) and separates the double-stranded (ds)DNA. Forms a right-handed helical filament on oriC DNA; dsDNA binds to the exterior of the filament while single-stranded (ss)DNA is stabiized in the filament's interior. The ATP-DnaA-oriC complex binds and stabilizes one strand of the AT-rich DNA unwinding element (DUE), permitting loading of DNA polymerase. After initiation quickly degrades to an ADP-DnaA complex that is not apt for DNA replication. Binds acidic phospholipids. The sequence is that of Chromosomal replication initiator protein DnaA from Kosmotoga olearia (strain ATCC BAA-1733 / DSM 21960 / TBF 19.5.1).